Consider the following 314-residue polypeptide: Acetaldehyde dehydrogenase 2 (314 aa).

15–18 (SGNI) provides a ligand contact to NAD(+). Cysteine 133 serves as the catalytic Acyl-thioester intermediate. NAD(+) is bound by residues 164–172 (SAGPGTRQN) and asparagine 289.

The protein belongs to the acetaldehyde dehydrogenase family.

It catalyses the reaction acetaldehyde + NAD(+) + CoA = acetyl-CoA + NADH + H(+). This Nocardioides sp. (strain ATCC BAA-499 / JS614) protein is Acetaldehyde dehydrogenase 2.